Consider the following 217-residue polypeptide: Oxygen-evolving enhancer protein 3-1, chloroplastic (217 aa).

A chloroplast-targeting transit peptide spans Met1 to Ala68.

This sequence belongs to the PsbQ family.

The protein localises to the plastid. The protein resides in the chloroplast thylakoid membrane. In Zea mays (Maize), this protein is Oxygen-evolving enhancer protein 3-1, chloroplastic (PSBQ1).